Here is an 82-residue protein sequence, read N- to C-terminus: U-actitoxin-Oulsp2 (82 aa).

The first 21 residues, 1 to 21 (MNTKLVVVFLLSAILFVSVTA), serve as a signal peptide directing secretion. A propeptide spanning residues 22–46 (SRPGKDLERDEAYETYDDERPYFKR) is cleaved from the precursor. A ShKT domain is found at 48–82 (CKDNLPAATCSNVKANNNCSSEKYKTNCAKTCGEC). 3 disulfide bridges follow: cysteine 48–cysteine 82, cysteine 57–cysteine 75, and cysteine 66–cysteine 79. A theoritically crucial for binding to potassium channels region spans residues 70–71 (KY).

Belongs to the sea anemone type 1 potassium channel toxin family. Type 1b subfamily.

It localises to the secreted. The protein resides in the nematocyst. Functionally, probable toxin with unknown function. In contrast to similar toxins, this toxin does not inhibit voltage-gated potassium channels (tested at 100 nM). Does not show antimicrobial activities against bacteria and yeasts. The polypeptide is U-actitoxin-Oulsp2 (Oulactis sp. (Sea anemone)).